The following is a 209-amino-acid chain: Protein N-terminal glutamine amidohydrolase (209 aa).

Active-site residues include cysteine 30, histidine 83, and aspartate 99.

Belongs to the NTAQ1 family. Monomer. As to expression, widely expressed.

It localises to the cytoplasm. It is found in the cytosol. Its subcellular location is the nucleus. It carries out the reaction N-terminal L-glutaminyl-[protein] + H2O = N-terminal L-glutamyl-[protein] + NH4(+). Functionally, mediates the side-chain deamidation of N-terminal glutamine residues to glutamate, an important step in N-end rule pathway of protein degradation. Conversion of the resulting N-terminal glutamine to glutamate renders the protein susceptible to arginylation, polyubiquitination and degradation as specified by the N-end rule. Does not act on substrates with internal or C-terminal glutamine and does not act on non-glutamine residues in any position. Does not deaminate acetylated N-terminal glutamine. With the exception of proline, all tested second-position residues on substrate peptides do not greatly influence the activity. In contrast, a proline at position 2, virtually abolishes deamidation of N-terminal glutamine. This is Protein N-terminal glutamine amidohydrolase (Ntaq1) from Mus musculus (Mouse).